The following is a 126-amino-acid chain: Large ribosomal subunit protein bL12 (126 aa).

The protein belongs to the bacterial ribosomal protein bL12 family. As to quaternary structure, homodimer. Part of the ribosomal stalk of the 50S ribosomal subunit. Forms a multimeric L10(L12)X complex, where L10 forms an elongated spine to which 2 to 4 L12 dimers bind in a sequential fashion. Binds GTP-bound translation factors.

Functionally, forms part of the ribosomal stalk which helps the ribosome interact with GTP-bound translation factors. Is thus essential for accurate translation. This is Large ribosomal subunit protein bL12 from Blochmanniella floridana.